The primary structure comprises 254 residues: Pimeloyl-[acyl-carrier protein] methyl ester esterase (254 aa).

Substrate contacts are provided by residues tryptophan 20, 80-81 (SL), and 141-145 (FLALQ). The active-site Nucleophile is serine 80. Residues aspartate 205 and histidine 233 contribute to the active site. A substrate-binding site is contributed by histidine 233.

Belongs to the AB hydrolase superfamily. Carboxylesterase BioH family. As to quaternary structure, monomer.

The protein resides in the cytoplasm. It catalyses the reaction 6-carboxyhexanoyl-[ACP] methyl ester + H2O = 6-carboxyhexanoyl-[ACP] + methanol + H(+). Its pathway is cofactor biosynthesis; biotin biosynthesis. In terms of biological role, the physiological role of BioH is to remove the methyl group introduced by BioC when the pimeloyl moiety is complete. It allows to synthesize pimeloyl-ACP via the fatty acid synthetic pathway through the hydrolysis of the ester bonds of pimeloyl-ACP esters. This Methylococcus capsulatus (strain ATCC 33009 / NCIMB 11132 / Bath) protein is Pimeloyl-[acyl-carrier protein] methyl ester esterase.